Here is a 432-residue protein sequence, read N- to C-terminus: Serine/threonine-protein kinase Sgk1 (432 aa).

Residues 67–93 are disordered; it reads PELMNANPSPPPSPSQQINLGPSSNPH. Residues 82-92 show a composition bias toward polar residues; that stretch reads QQINLGPSSNP. The Protein kinase domain maps to 99–356; it reads FHFLKVIGKG…FTEIKNHIFF (258 aa). ATP is bound by residues 105–113 and Lys128; that span reads IGKGSFGKV. Catalysis depends on Asp223, which acts as the Proton acceptor. Positions 357–432 constitute an AGC-kinase C-terminal domain; it reads SPINWDDLIN…SYAPPVDSFL (76 aa).

The protein belongs to the protein kinase superfamily. AGC Ser/Thr protein kinase family.

Its subcellular location is the cytoplasm. The protein localises to the nucleus. It localises to the endoplasmic reticulum. The enzyme catalyses L-seryl-[protein] + ATP = O-phospho-L-seryl-[protein] + ADP + H(+). It catalyses the reaction L-threonyl-[protein] + ATP = O-phospho-L-threonyl-[protein] + ADP + H(+). In terms of biological role, protein kinase that may play an important role in cellular stress response. May be involved in the regulation of processes such as cell survival, neuronal excitability and renal sodium excretion. This Gallus gallus (Chicken) protein is Serine/threonine-protein kinase Sgk1 (SGK1).